We begin with the raw amino-acid sequence, 254 residues long: Tyrosine-protein phosphatase YwqE (254 aa).

Belongs to the metallo-dependent hydrolases superfamily. CpsB/CapC family. Mn(2+) serves as cofactor.

It carries out the reaction O-phospho-L-tyrosyl-[protein] + H2O = L-tyrosyl-[protein] + phosphate. With respect to regulation, inhibited by vanadate and sodium pyrophosphate. Not inhibited by sodium fluoride. Dephosphorylates the phosphotyrosine-containing proteins YwqD, YwqF and Ssb. This Bacillus subtilis (strain 168) protein is Tyrosine-protein phosphatase YwqE (ywqE).